Here is a 321-residue protein sequence, read N- to C-terminus: Putative pyridoxal kinase (321 aa).

Residues serine 23 and tyrosine 144 each coordinate substrate. ATP contacts are provided by residues 203–204 (TS) and 230–242 (TFPR…VGTG). Aspartate 243 serves as a coordination point for substrate.

The protein belongs to the pyridoxine kinase family. It depends on Zn(2+) as a cofactor. The cofactor is Mg(2+).

The catalysed reaction is pyridoxal + ATP = pyridoxal 5'-phosphate + ADP + H(+). In terms of biological role, required for synthesis of pyridoxal-5-phosphate from vitamin B6. This is Putative pyridoxal kinase from Caenorhabditis elegans.